The sequence spans 616 residues: Chaperone protein HscA homolog (616 aa).

This sequence belongs to the heat shock protein 70 family.

In terms of biological role, chaperone involved in the maturation of iron-sulfur cluster-containing proteins. Has a low intrinsic ATPase activity which is markedly stimulated by HscB. The chain is Chaperone protein HscA homolog from Histophilus somni (strain 2336) (Haemophilus somnus).